A 342-amino-acid chain; its full sequence is Central glycolytic genes regulator (342 aa).

A DNA-binding region (H-T-H motif) is located at residues 37–56 (RRNLAVSLGLTERVLRSEVT).

This sequence belongs to the SorC transcriptional regulatory family. In terms of assembly, homotetramer.

Its function is as follows. In the absence of glucose, represses the transcription of the gapA operon, which encodes five key glycolytic enzymes. The chain is Central glycolytic genes regulator (cggR) from Priestia megaterium (strain DSM 319 / IMG 1521) (Bacillus megaterium).